The primary structure comprises 253 residues: Small ribosomal subunit protein uS2 (253 aa).

It belongs to the universal ribosomal protein uS2 family.

This Chlorobium luteolum (strain DSM 273 / BCRC 81028 / 2530) (Pelodictyon luteolum) protein is Small ribosomal subunit protein uS2.